A 92-amino-acid polypeptide reads, in one-letter code: Small ribosomal subunit protein uS19 (92 aa).

It belongs to the universal ribosomal protein uS19 family.

Protein S19 forms a complex with S13 that binds strongly to the 16S ribosomal RNA. This chain is Small ribosomal subunit protein uS19, found in Trichormus variabilis (strain ATCC 29413 / PCC 7937) (Anabaena variabilis).